Reading from the N-terminus, the 367-residue chain is Probable cysteine protease RD19D (367 aa).

An N-terminal signal peptide occupies residues 1–22 (MVAKALAQLITCIILFCHVVAS). A propeptide spans 23 to 136 (VEDLTIRQVT…AEAPMVEVDG (114 aa)) (activation peptide). A glycan (N-linked (GlcNAc...) asparagine) is linked at asparagine 61. 2 disulfides stabilise this stretch: cysteine 158–cysteine 208 and cysteine 192–cysteine 241. Cysteine 161 is an active-site residue. A glycan (N-linked (GlcNAc...) asparagine) is linked at asparagine 254. A disulfide bridge connects residues cysteine 297 and cysteine 352. Catalysis depends on residues histidine 304 and asparagine 331.

The protein belongs to the peptidase C1 family.

In terms of biological role, probable thiol protease. This chain is Probable cysteine protease RD19D, found in Arabidopsis thaliana (Mouse-ear cress).